The following is a 158-amino-acid chain: SsrA-binding protein (158 aa).

Belongs to the SmpB family.

The protein localises to the cytoplasm. Its function is as follows. Required for rescue of stalled ribosomes mediated by trans-translation. Binds to transfer-messenger RNA (tmRNA), required for stable association of tmRNA with ribosomes. tmRNA and SmpB together mimic tRNA shape, replacing the anticodon stem-loop with SmpB. tmRNA is encoded by the ssrA gene; the 2 termini fold to resemble tRNA(Ala) and it encodes a 'tag peptide', a short internal open reading frame. During trans-translation Ala-aminoacylated tmRNA acts like a tRNA, entering the A-site of stalled ribosomes, displacing the stalled mRNA. The ribosome then switches to translate the ORF on the tmRNA; the nascent peptide is terminated with the 'tag peptide' encoded by the tmRNA and targeted for degradation. The ribosome is freed to recommence translation, which seems to be the essential function of trans-translation. The chain is SsrA-binding protein from Buchnera aphidicola subsp. Baizongia pistaciae (strain Bp).